A 65-amino-acid chain; its full sequence is uncharacterized protein (65 aa).

This is an uncharacterized protein from Bacillus subtilis (strain 168).